The sequence spans 629 residues: tRNA uridine 5-carboxymethylaminomethyl modification enzyme MnmG (629 aa).

Residues 13 to 18 (GGGHAG), valine 125, and serine 180 contribute to the FAD site. 273-287 (GPRYCPSIEDKVMRF) is a binding site for NAD(+). Glutamine 370 is an FAD binding site.

The protein belongs to the MnmG family. Homodimer. Heterotetramer of two MnmE and two MnmG subunits. FAD serves as cofactor.

It is found in the cytoplasm. Its function is as follows. NAD-binding protein involved in the addition of a carboxymethylaminomethyl (cmnm) group at the wobble position (U34) of certain tRNAs, forming tRNA-cmnm(5)s(2)U34. The polypeptide is tRNA uridine 5-carboxymethylaminomethyl modification enzyme MnmG (Shigella flexneri serotype 5b (strain 8401)).